Reading from the N-terminus, the 932-residue chain is Beta-mannosidase A (932 aa).

An N-terminal signal peptide occupies residues 1–21; it reads MRIREQTILALLSPGLPPVTG. N-linked (GlcNAc...) asparagine glycans are attached at residues Asn-40, Asn-248, Asn-283, Asn-317, and Asn-348. Catalysis depends on Glu-480, which acts as the Proton donor. N-linked (GlcNAc...) asparagine glycosylation is found at Asn-538, Asn-609, Asn-632, Asn-659, Asn-739, Asn-762, and Asn-791.

This sequence belongs to the glycosyl hydrolase 2 family. Beta-mannosidase A subfamily. As to quaternary structure, homodimer.

It is found in the secreted. It catalyses the reaction Hydrolysis of terminal, non-reducing beta-D-mannose residues in beta-D-mannosides.. It participates in glycan metabolism; N-glycan degradation. Exoglycosidase that cleaves the single beta-linked mannose residue from the non-reducing end of beta-mannosidic oligosaccharides of various complexity and length. Involved in the degradation of polymeric mannan and galactomannan. This Aspergillus clavatus (strain ATCC 1007 / CBS 513.65 / DSM 816 / NCTC 3887 / NRRL 1 / QM 1276 / 107) protein is Beta-mannosidase A (mndA).